A 447-amino-acid chain; its full sequence is T-box transcription factor TBX20 (447 aa).

Residues 62–81 (DAHGEFGGGSGSSPSSSSLC) are disordered. A DNA-binding region (T-box) is located at residues 109–288 (LWDKFHELGT…SNPFAKGFRD (180 aa)). Positions 316–340 (TYGGEEDVLGDESQTTPNRGSAFTT) are disordered. Polar residues predominate over residues 327–340 (ESQTTPNRGSAFTT).

Its subcellular location is the nucleus. Its function is as follows. Acts as a transcriptional activator and repressor required for cardiac development and may have key roles in the maintenance of functional and structural phenotypes in adult heart. The polypeptide is T-box transcription factor TBX20 (TBX20) (Homo sapiens (Human)).